The primary structure comprises 838 residues: MGNGLWFVGVIILGVAWGQVHDWTEQTDPWFLDGLGMDRMYWRDTNTGRLWLPNTPDPQKPPRGFLAPPDELNLTTASLPLLRWYEERFCFVLVTTAEFPRDPGQLLYIPKTYLLGRPPNASLPAPTTVEPTAQPPPSVAPLKGLLHNPAASVLLRSRAWVTFSAVPDPEALTFPRGDNVATASHPSGPRDTPPPRPPVGARRHPTTELDITHLHNASTTWLATRGLLRSPGRYVYFSPSASTWPVGIWTTGELVLGCDAALVRARYGREFMGLVISMHDSPPVEVMVVPAGQTLDRVGDPADENPPGALPGPPGGPRYRVFVLGSLTRADNGSALDALRRVGGYPEEGTNYAQFLSRAYAEFFSGDAGAEQGPRPPLFWRLTGLLATSGFAFVNAAHANGAVCLSDLLGFLAHSRALAGLAARGAAGCAADSVFFNVSVLDPTARLQLEARLQHLVAEILEREQSLALHALGYQLAFVLDSPSAYDAVAPSAAHLIDALYAEFLGGRVLTTPVVHRALFYASAVLRQPFLAGVPSAVQRERARRSLLIASALCTSDVAAATNADLRTALARADHQKTLFWLPDHFSPCAASLRFDLDESVFILDALAQATRSETPVEVLAQQTHGLASTLTRWAHYNALIRAFVPEASHRCGGQSANVEPRILVPITHNASYVVTHSPLPRGIGYKLTGVDVRRPLFLTYLTATCEGSTRDIESKRLVRTQNQRDLGLVGAVFMRYTPAGEVMSVLLVDTDNTQQQIAAGPTEGAPSVFSSDVPSTALLLFPNGTVIHLLAFDTQPVAAIAPGFLAASALGVVMITAALAGILKVLRTSVPFFWRRE.

An N-terminal signal peptide occupies residues 1–18; that stretch reads MGNGLWFVGVIILGVAWG. The Virion surface portion of the chain corresponds to 19 to 803; the sequence is QVHDWTEQTD…DTQPVAAIAP (785 aa). Residues Asn73 and Asn120 are each glycosylated (N-linked (GlcNAc...) asparagine; by host). The tract at residues 174 to 204 is disordered; that stretch reads FPRGDNVATASHPSGPRDTPPPRPPVGARRH. N-linked (GlcNAc...) asparagine; by host glycosylation occurs at Asn216. The interval 259-323 is interaction with gL; the sequence is DAALVRARYG…PGGPRYRVFV (65 aa). 4 N-linked (GlcNAc...) asparagine; by host glycosylation sites follow: Asn332, Asn437, Asn670, and Asn784. A helical transmembrane segment spans residues 804-824; that stretch reads GFLAASALGVVMITAALAGIL. Residues 825-838 are Intravirion-facing; sequence KVLRTSVPFFWRRE.

Belongs to the herpesviridae glycoprotein H family. As to quaternary structure, interacts with glycoprotein L (gL); this interaction is necessary for the correct processing and cell surface expression of gH. The heterodimer gH/gL seems to interact with gB trimers during fusion. Associates with the gB-gH/gL-gD complex. Interacts with VP16. Post-translationally, N-glycosylated, O-glycosylated, and sialylated.

Its subcellular location is the virion membrane. It localises to the host cell membrane. It is found in the host endosome membrane. In terms of biological role, the heterodimer glycoprotein H-glycoprotein L is required for the fusion of viral and plasma membranes leading to virus entry into the host cell. Following initial binding to host receptor, membrane fusion is mediated by the fusion machinery composed of gB and the heterodimer gH/gL. May also be involved in the fusion between the virion envelope and the outer nuclear membrane during virion morphogenesis. This Human herpesvirus 1 (strain 17) (HHV-1) protein is Envelope glycoprotein H.